The primary structure comprises 209 residues: Lipopolysaccharide export system protein LptC (209 aa).

Residues 7–26 traverse the membrane as a helical segment; it reads NIRWNVILGVIALCALAWFY.

It belongs to the LptC family. Component of the lipopolysaccharide transport and assembly complex. Interacts with LptA and the LptBFG transporter complex.

The protein localises to the cell inner membrane. Functionally, involved in the assembly of lipopolysaccharide (LPS). Required for the translocation of LPS from the inner membrane to the outer membrane. Facilitates the transfer of LPS from the inner membrane to the periplasmic protein LptA. Could be a docking site for LptA. In Haemophilus influenzae (strain ATCC 51907 / DSM 11121 / KW20 / Rd), this protein is Lipopolysaccharide export system protein LptC.